The following is a 567-amino-acid chain: Potassium-transporting ATPase potassium-binding subunit (567 aa).

The next 11 membrane-spanning stretches (helical) occupy residues 5–25 (GWIQ…PLGF), 64–84 (TAYA…LYAL), 136–156 (GLTV…IALI), 179–199 (LYVL…LGIP), 254–274 (ISNL…TNVF), 285–305 (WAIL…CYWA), 330–350 (FGIA…CGAV), 357–376 (FTAL…EVIV), 421–441 (MLAI…AVVL), 486–506 (ITIG…ALAI), and 529–549 (LFVG…FFPA).

It belongs to the KdpA family. As to quaternary structure, the system is composed of three essential subunits: KdpA, KdpB and KdpC.

It is found in the cell inner membrane. Its function is as follows. Part of the high-affinity ATP-driven potassium transport (or Kdp) system, which catalyzes the hydrolysis of ATP coupled with the electrogenic transport of potassium into the cytoplasm. This subunit binds the periplasmic potassium ions and delivers the ions to the membrane domain of KdpB through an intramembrane tunnel. This Mesorhizobium japonicum (strain LMG 29417 / CECT 9101 / MAFF 303099) (Mesorhizobium loti (strain MAFF 303099)) protein is Potassium-transporting ATPase potassium-binding subunit.